The chain runs to 89 residues: Small ribosomal subunit protein uS15 (89 aa).

Belongs to the universal ribosomal protein uS15 family. Part of the 30S ribosomal subunit. Forms a bridge to the 50S subunit in the 70S ribosome, contacting the 23S rRNA.

Its function is as follows. One of the primary rRNA binding proteins, it binds directly to 16S rRNA where it helps nucleate assembly of the platform of the 30S subunit by binding and bridging several RNA helices of the 16S rRNA. In terms of biological role, forms an intersubunit bridge (bridge B4) with the 23S rRNA of the 50S subunit in the ribosome. The sequence is that of Small ribosomal subunit protein uS15 from Pectobacterium carotovorum subsp. carotovorum (strain PC1).